The sequence spans 212 residues: Thymidylate kinase (212 aa).

Residue 11 to 18 (GLEGAGKS) participates in ATP binding.

It belongs to the thymidylate kinase family.

It catalyses the reaction dTMP + ATP = dTDP + ADP. Functionally, phosphorylation of dTMP to form dTDP in both de novo and salvage pathways of dTTP synthesis. This Vibrio vulnificus (strain CMCP6) protein is Thymidylate kinase.